A 413-amino-acid polypeptide reads, in one-letter code: CinA-like protein (413 aa).

Belongs to the CinA family.

The sequence is that of CinA-like protein from Desulfosudis oleivorans (strain DSM 6200 / JCM 39069 / Hxd3) (Desulfococcus oleovorans).